The following is a 512-amino-acid chain: Probable DNA ligase (512 aa).

Residue Glu-208 coordinates ATP. Catalysis depends on Lys-210, which acts as the N6-AMP-lysine intermediate. Residues Arg-215, Arg-230, Glu-259, Phe-299, Arg-374, and Lys-380 each coordinate ATP.

Belongs to the ATP-dependent DNA ligase family. Mg(2+) is required as a cofactor.

It carries out the reaction ATP + (deoxyribonucleotide)n-3'-hydroxyl + 5'-phospho-(deoxyribonucleotide)m = (deoxyribonucleotide)n+m + AMP + diphosphate.. In terms of biological role, DNA ligase that seals nicks in double-stranded DNA during DNA replication, DNA recombination and DNA repair. In Streptomyces coelicolor (strain ATCC BAA-471 / A3(2) / M145), this protein is Probable DNA ligase.